We begin with the raw amino-acid sequence, 112 residues long: Large ribosomal subunit protein uL22 (112 aa).

It belongs to the universal ribosomal protein uL22 family. As to quaternary structure, part of the 50S ribosomal subunit.

In terms of biological role, this protein binds specifically to 23S rRNA; its binding is stimulated by other ribosomal proteins, e.g. L4, L17, and L20. It is important during the early stages of 50S assembly. It makes multiple contacts with different domains of the 23S rRNA in the assembled 50S subunit and ribosome. The globular domain of the protein is located near the polypeptide exit tunnel on the outside of the subunit, while an extended beta-hairpin is found that lines the wall of the exit tunnel in the center of the 70S ribosome. The protein is Large ribosomal subunit protein uL22 of Caldanaerobacter subterraneus subsp. tengcongensis (strain DSM 15242 / JCM 11007 / NBRC 100824 / MB4) (Thermoanaerobacter tengcongensis).